We begin with the raw amino-acid sequence, 336 residues long: Alpha-N-acetylgalactosaminide alpha-2,6-sialyltransferase 5 (336 aa).

The Cytoplasmic portion of the chain corresponds to 1 to 8; the sequence is MKTLMRHG. The chain crosses the membrane as a helical; Signal-anchor for type II membrane protein span at residues 9 to 29; it reads LAVCLALTTMCTSLLLVYSSL. Residues 30 to 336 are Lumenal-facing; it reads GGQKERPPQQ…INHPENKPVF (307 aa). The interval 32 to 81 is disordered; sequence QKERPPQQQQQQQQQQQQASATGSSQPAAESSTQQRPGVPAGPRPLDGYL. Low complexity predominate over residues 38-49; that stretch reads QQQQQQQQQQQQ. The span at 50-67 shows a compositional bias: polar residues; the sequence is ASATGSSQPAAESSTQQR. The cysteines at positions 96 and 245 are disulfide-linked. N-linked (GlcNAc...) asparagine glycosylation is found at asparagine 137 and asparagine 161.

The protein belongs to the glycosyltransferase 29 family.

The protein localises to the golgi apparatus membrane. It catalyses the reaction a ganglioside GM1b (d18:1(4E)) + CMP-N-acetyl-beta-neuraminate = a ganglioside GD1alpha (d18:1(4E)) + CMP + H(+). The enzyme catalyses N-acetyl-alpha-neuraminosyl-(2-&gt;3)-beta-D-galactosyl-(1-&gt;3)-N-acetyl-beta-D-glucosaminyl-(1-&gt;3)-beta-D-galactosyl-(1-&gt;4)-beta-D-glucosyl-(1&lt;-&gt;1')-N-acyl-sphing-4-enine + CMP-N-acetyl-beta-neuraminate = N-acetyl-alpha-neuraminosyl-(2-&gt;3)-beta-D-galactosyl-(1-&gt;3)-[N-acetyl-alpha-neuraminosyl-(2-&gt;6)]-N-acetyl-beta-D-glucosaminyl-(1-&gt;3)-beta-D-galactosyl-(1-&gt;4)-beta-D-glucosyl-(1&lt;-&gt;1')-N-acyl-sphing-4-enine + CMP + H(+). It participates in glycolipid biosynthesis. Functionally, predominantly catalyzes the biosynthesis of ganglioside GD1alpha from GM1b in the brain, by transferring the sialyl group (N-acetyl-alpha-neuraminyl or NeuAc) from CMP-NeuAc to the GalNAc residue on the NeuAc-alpha-2,3-Gal-beta-1,3-GalNAc sequence of GM1b. GD1alpha is a critical molecule in the communication and interaction between neuronal cells and their supportive cells, particularly in brain tissues, and functions as an adhesion molecule in the process of metastasis. Also shows activity towards sialyl Lc4Cer (N-acetyl-alpha-neuraminosyl-(2-&gt;3)-beta-D-galactosyl-(1-&gt;3)-N-acetyl-beta-D-glucosaminyl-(1-&gt;3)-beta-D-galactosyl-(1-&gt;4)-beta-D-glucosyl-(1&lt;-&gt;1')-N-acyl-sphing-4-enine) generating disialyl Lc4Cer, which can lead to the synthesis of disialyl Lewis a (Le(a)), suggested to be a cancer-associated antigen. The polypeptide is Alpha-N-acetylgalactosaminide alpha-2,6-sialyltransferase 5 (ST6GALNAC5) (Homo sapiens (Human)).